A 477-amino-acid polypeptide reads, in one-letter code: Cysteine--tRNA ligase (477 aa).

Residue C29 coordinates Zn(2+). Residues 31–41 (PTVYNYFHVGN) carry the 'HIGH' region motif. 3 residues coordinate Zn(2+): C209, H234, and E238. The 'KMSKS' region signature appears at 267-271 (KMSKS). K270 lines the ATP pocket.

The protein belongs to the class-I aminoacyl-tRNA synthetase family. Monomer. Requires Zn(2+) as cofactor.

It is found in the cytoplasm. The catalysed reaction is tRNA(Cys) + L-cysteine + ATP = L-cysteinyl-tRNA(Cys) + AMP + diphosphate. The sequence is that of Cysteine--tRNA ligase from Desulfitobacterium hafniense (strain DSM 10664 / DCB-2).